Consider the following 201-residue polypeptide: Superoxide dismutase [Fe] (201 aa).

Residues His27, His79, Asp161, and His165 each coordinate Fe cation.

It belongs to the iron/manganese superoxide dismutase family. Homodimer. It depends on Fe cation as a cofactor.

It catalyses the reaction 2 superoxide + 2 H(+) = H2O2 + O2. Destroys superoxide anion radicals which are normally produced within the cells and which are toxic to biological systems. This is Superoxide dismutase [Fe] (sodB) from Synechococcus elongatus (strain ATCC 33912 / PCC 7942 / FACHB-805) (Anacystis nidulans R2).